Consider the following 229-residue polypeptide: Putative N-acetylmannosamine-6-phosphate 2-epimerase (229 aa).

The protein belongs to the NanE family.

The catalysed reaction is an N-acyl-D-glucosamine 6-phosphate = an N-acyl-D-mannosamine 6-phosphate. Its pathway is amino-sugar metabolism; N-acetylneuraminate degradation; D-fructose 6-phosphate from N-acetylneuraminate: step 3/5. Functionally, converts N-acetylmannosamine-6-phosphate (ManNAc-6-P) to N-acetylglucosamine-6-phosphate (GlcNAc-6-P). The chain is Putative N-acetylmannosamine-6-phosphate 2-epimerase from Salmonella arizonae (strain ATCC BAA-731 / CDC346-86 / RSK2980).